The following is a 295-amino-acid chain: MIKQYLQVTKPGIIFGNLISVIGGFLLASKGSIDYPLFLFTLVGVSLVVASGCVFNNYIDRDIDRKMERTKNRVLVKGLISPKMSLVYATLLGIAGFMLLWFGANPLAMWLAVMGFVVYVGVYSLYMKRHSVYGTLIGSLSGAAPPVIGYCAVTNEFDTGALILLAIFSLWQMPHSYAIAIFRFKDYQAANIPVLPVVKGISVAKNHITLYIIAFAVATLMLSLGGYAGYKYLVVAAAVSVWWLGMALRGYKAENDKVWARKLFVFSIVAITSLSVMMSVDFMVPDSHNLLTYVW.

A run of 9 helical transmembrane segments spans residues 8 to 28 (VTKP…FLLA), 35 to 55 (YPLF…GCVF), 74 to 94 (VLVK…LLGI), 106 to 125 (PLAM…VYSL), 132 to 152 (VYGT…GYCA), 162 to 182 (LILL…IAIF), 208 to 228 (ITLY…GGYA), 233 to 253 (LVVA…GYKA), and 264 to 284 (FVFS…DFMV).

The protein belongs to the UbiA prenyltransferase family. Protoheme IX farnesyltransferase subfamily.

It is found in the cell inner membrane. The catalysed reaction is heme b + (2E,6E)-farnesyl diphosphate + H2O = Fe(II)-heme o + diphosphate. Its pathway is porphyrin-containing compound metabolism; heme O biosynthesis; heme O from protoheme: step 1/1. Functionally, converts heme B (protoheme IX) to heme O by substitution of the vinyl group on carbon 2 of heme B porphyrin ring with a hydroxyethyl farnesyl side group. This is Protoheme IX farnesyltransferase from Cronobacter sakazakii (strain ATCC BAA-894) (Enterobacter sakazakii).